The sequence spans 388 residues: Succinate--CoA ligase [ADP-forming] subunit beta (388 aa).

An ATP-grasp domain is found at 9–244 (KQLFARYGLP…PSQEDSREAH (236 aa)). ATP contacts are provided by residues Lys-46, 53 to 55 (GRG), Glu-99, Thr-102, and Glu-107. Residues Asn-199 and Asp-213 each coordinate Mg(2+). Residues Asn-264 and 321-323 (GIV) each bind substrate.

This sequence belongs to the succinate/malate CoA ligase beta subunit family. As to quaternary structure, heterotetramer of two alpha and two beta subunits. The cofactor is Mg(2+).

It catalyses the reaction succinate + ATP + CoA = succinyl-CoA + ADP + phosphate. The catalysed reaction is GTP + succinate + CoA = succinyl-CoA + GDP + phosphate. The protein operates within carbohydrate metabolism; tricarboxylic acid cycle; succinate from succinyl-CoA (ligase route): step 1/1. Succinyl-CoA synthetase functions in the citric acid cycle (TCA), coupling the hydrolysis of succinyl-CoA to the synthesis of either ATP or GTP and thus represents the only step of substrate-level phosphorylation in the TCA. The beta subunit provides nucleotide specificity of the enzyme and binds the substrate succinate, while the binding sites for coenzyme A and phosphate are found in the alpha subunit. The chain is Succinate--CoA ligase [ADP-forming] subunit beta from Pectobacterium atrosepticum (strain SCRI 1043 / ATCC BAA-672) (Erwinia carotovora subsp. atroseptica).